Here is a 220-residue protein sequence, read N- to C-terminus: ATP synthase F(0) complex subunit a (220 aa).

Helical transmembrane passes span 12–32, 69–89, 91–111, 130–150, 158–178, and 183–203; these read PTLL…TLLP, WAMI…FTPT, QLSL…LLGL, LLIP…PFAL, LTAG…LLPM, and ALLT…VAMI.

This sequence belongs to the ATPase A chain family. As to quaternary structure, component of the ATP synthase complex composed at least of ATP5F1A/subunit alpha, ATP5F1B/subunit beta, ATP5MC1/subunit c (homooctomer), MT-ATP6/subunit a, MT-ATP8/subunit 8, ATP5ME/subunit e, ATP5MF/subunit f, ATP5MG/subunit g, ATP5MK/subunit k, ATP5MJ/subunit j, ATP5F1C/subunit gamma, ATP5F1D/subunit delta, ATP5F1E/subunit epsilon, ATP5PF/subunit F6, ATP5PB/subunit b, ATP5PD/subunit d, ATP5PO/subunit OSCP. ATP synthase complex consists of a soluble F(1) head domain (subunits alpha(3) and beta(3)) - the catalytic core - and a membrane F(0) domain - the membrane proton channel (subunits c, a, 8, e, f, g, k and j). These two domains are linked by a central stalk (subunits gamma, delta, and epsilon) rotating inside the F1 region and a stationary peripheral stalk (subunits F6, b, d, and OSCP). Interacts with DNAJC30; interaction is direct.

The protein resides in the mitochondrion inner membrane. It carries out the reaction H(+)(in) = H(+)(out). Functionally, subunit a, of the mitochondrial membrane ATP synthase complex (F(1)F(0) ATP synthase or Complex V) that produces ATP from ADP in the presence of a proton gradient across the membrane which is generated by electron transport complexes of the respiratory chain. ATP synthase complex consist of a soluble F(1) head domain - the catalytic core - and a membrane F(1) domain - the membrane proton channel. These two domains are linked by a central stalk rotating inside the F(1) region and a stationary peripheral stalk. During catalysis, ATP synthesis in the catalytic domain of F(1) is coupled via a rotary mechanism of the central stalk subunits to proton translocation. With the subunit c (ATP5MC1), forms the proton-conducting channel in the F(0) domain, that contains two crucial half-channels (inlet and outlet) that facilitate proton movement from the mitochondrial intermembrane space (IMS) into the matrix. Protons are taken up via the inlet half-channel and released through the outlet half-channel, following a Grotthuss mechanism. This Latimeria chalumnae (Coelacanth) protein is ATP synthase F(0) complex subunit a.